The following is a 142-amino-acid chain: Small ribosomal subunit protein bS6 (142 aa).

The span at 110–133 (NKKPSHAKEKHEKTEHTHSHHLEE) shows a compositional bias: basic and acidic residues. Residues 110–142 (NKKPSHAKEKHEKTEHTHSHHLEEAESVGSHSE) form a disordered region.

This sequence belongs to the bacterial ribosomal protein bS6 family.

In terms of biological role, binds together with bS18 to 16S ribosomal RNA. The protein is Small ribosomal subunit protein bS6 of Helicobacter pylori (strain HPAG1).